Reading from the N-terminus, the 416-residue chain is Pentraxin fusion protein (416 aa).

An N-terminal signal peptide occupies residues 1 to 14; it reads MKSLLLFLKSQVFG. A glycan (N-linked (GlcNAc...) asparagine) is linked at Asn129. The tract at residues 184–206 is disordered; sequence GTEASDSSESVDGTEAPASPESD. The Pentraxin (PTX) domain maps to 220–416; sequence TNKSFMFPKE…YSMIGNVAEV (197 aa). An N-linked (GlcNAc...) asparagine glycan is attached at Asn221. A disulfide bridge connects residues Cys251 and Cys311. Positions 275, 353, 354, and 364 each coordinate Ca(2+).

It depends on Ca(2+) as a cofactor.

This is Pentraxin fusion protein (pxn1) from Xenopus laevis (African clawed frog).